Consider the following 250-residue polypeptide: 5'-nucleotidase SurE (250 aa).

A divalent metal cation-binding residues include D8, D9, S39, and N91.

The protein belongs to the SurE nucleotidase family. A divalent metal cation is required as a cofactor.

It localises to the cytoplasm. The enzyme catalyses a ribonucleoside 5'-phosphate + H2O = a ribonucleoside + phosphate. Functionally, nucleotidase that shows phosphatase activity on nucleoside 5'-monophosphates. This Leptospira borgpetersenii serovar Hardjo-bovis (strain L550) protein is 5'-nucleotidase SurE.